A 440-amino-acid chain; its full sequence is Tuliposide B-converting enzyme 1, amyloplastic (440 aa).

The N-terminal 58 residues, 1-58 (MSIVSFCSSLPAGPHGFKHGRGTRDMVHMPCIVRRTARSPAQACRLLRWNKYHCAAVP), are a transit peptide targeting the amyloplast. Serine 232 acts as the Acyl-ester intermediate in catalysis. Catalysis depends on charge relay system residues aspartate 325 and histidine 357.

Belongs to the AB hydrolase superfamily. In terms of assembly, homodimer. In terms of processing, not glycosylated. Expressed in the pollen grains.

It localises to the plastid. The protein localises to the amyloplast. The catalysed reaction is 6-tuliposide B = tulipalin B + D-glucose. Its activity is regulated as follows. Inhibited by Ag(+), Cu(2+), Fe(2+), Hg(2+), V(3+) and phenylmethylsulfonyl fluoride (PMSF). Lactone-forming carboxylesterase, specifically catalyzing intramolecular transesterification, but not hydrolysis. Involved in the biosynthesis of tulipalins, defensive chemicals that show antimicrobial activities against a broad range of strains of bacteria and fungi. Substrates are 6-tuliposide B &gt; 6-tuliposide A. The chain is Tuliposide B-converting enzyme 1, amyloplastic from Tulipa gesneriana (Garden tulip).